The chain runs to 427 residues: Glutamate-1-semialdehyde 2,1-aminomutase (427 aa).

Lys-265 is modified (N6-(pyridoxal phosphate)lysine).

The protein belongs to the class-III pyridoxal-phosphate-dependent aminotransferase family. HemL subfamily. Homodimer. Pyridoxal 5'-phosphate serves as cofactor.

It localises to the cytoplasm. It carries out the reaction (S)-4-amino-5-oxopentanoate = 5-aminolevulinate. Its pathway is porphyrin-containing compound metabolism; protoporphyrin-IX biosynthesis; 5-aminolevulinate from L-glutamyl-tRNA(Glu): step 2/2. The sequence is that of Glutamate-1-semialdehyde 2,1-aminomutase from Burkholderia ambifaria (strain ATCC BAA-244 / DSM 16087 / CCUG 44356 / LMG 19182 / AMMD) (Burkholderia cepacia (strain AMMD)).